We begin with the raw amino-acid sequence, 203 residues long: Putative 3-methyladenine DNA glycosylase (203 aa).

Belongs to the DNA glycosylase MPG family.

The polypeptide is Putative 3-methyladenine DNA glycosylase (Clostridium botulinum (strain ATCC 19397 / Type A)).